Consider the following 142-residue polypeptide: Large ribosomal subunit protein uL13 (142 aa).

It belongs to the universal ribosomal protein uL13 family. In terms of assembly, part of the 50S ribosomal subunit.

This protein is one of the early assembly proteins of the 50S ribosomal subunit, although it is not seen to bind rRNA by itself. It is important during the early stages of 50S assembly. The chain is Large ribosomal subunit protein uL13 from Pseudomonas fluorescens (strain Pf0-1).